The sequence spans 502 residues: Tryptophan decarboxylase TDC1 (502 aa).

Residues 1-18 (MGSLDSNYDTESPASVGQ) are compositionally biased toward polar residues. The tract at residues 1–21 (MGSLDSNYDTESPASVGQFNP) is disordered. Position 319 is an N6-(pyridoxal phosphate)lysine (lysine 319).

The protein belongs to the group II decarboxylase family. Requires pyridoxal 5'-phosphate as cofactor. In terms of tissue distribution, highly expressed in apex. Expressed in young stem and bark tissues. Expressed at low levels in leaves, fruits and seeds.

It catalyses the reaction L-tryptophan + H(+) = tryptamine + CO2. In terms of biological role, involved in the biosynthesis of tryptamine. Supplies tryptamine for the indole moiety of camptothecin (CPT), an anti-cancer monoterpene alkaloid. Represents a key step in monoterpene indole alkaloid biosynthesis. Is specific for tryptophan, and inactive against tyrosine, phenylalanine and 3,4-dihydroxyphenylalanine (dopa). The chain is Tryptophan decarboxylase TDC1 from Camptotheca acuminata (Happy tree).